A 242-amino-acid chain; its full sequence is Endothelial protein C receptor (242 aa).

Residues 1–17 (MLTKFLPLLLLLLPGCA) form the signal peptide. Residues 18-214 (LCNSDGSQSL…GSQTGRSYTS (197 aa)) are Extracellular-facing. N-linked (GlcNAc...) asparagine glycosylation is found at Asn46, Asn63, Asn140, Asn166, and Asn176. 2 disulfide bridges follow: Cys119–Cys190 and Cys223–Cys236. The chain crosses the membrane as a helical span at residues 215 to 235 (LVLGILMGCFIIAGVAVGIFM). Over 236 to 242 (CTSGRRC) the chain is Cytoplasmic.

Expressed in endothelial cells.

Its subcellular location is the membrane. Functionally, binds activated protein C. Enhances protein C activation by the thrombin-thrombomodulin complex; plays a role in the protein C pathway controlling blood coagulation. This Mus musculus (Mouse) protein is Endothelial protein C receptor (Procr).